A 187-amino-acid chain; its full sequence is Adenylate kinase (187 aa).

10–15 (GSGKGT) contacts ATP. The tract at residues 30–59 (STGDLLRSEVVAGTPLGLQAKQVMAQGDLV) is NMP. AMP contacts are provided by residues Thr31, Arg36, 57-59 (DLV), 85-88 (GYPR), and Gln92. Residues 126–136 (GRAQAEGREDD) form an LID region. Arg127 contacts ATP. Residues Arg133 and Arg144 each contribute to the AMP site. Gly172 contacts ATP.

Belongs to the adenylate kinase family. As to quaternary structure, monomer.

It localises to the cytoplasm. It carries out the reaction AMP + ATP = 2 ADP. Its pathway is purine metabolism; AMP biosynthesis via salvage pathway; AMP from ADP: step 1/1. Catalyzes the reversible transfer of the terminal phosphate group between ATP and AMP. Plays an important role in cellular energy homeostasis and in adenine nucleotide metabolism. The polypeptide is Adenylate kinase (Xylella fastidiosa (strain M12)).